The chain runs to 140 residues: FlaA locus uncharacterized protein YlxG (140 aa).

Positions methionine 1–asparagine 21 are disordered.

Belongs to the FlgD family.

The sequence is that of FlaA locus uncharacterized protein YlxG (ylxG) from Bacillus subtilis (strain 168).